A 126-amino-acid chain; its full sequence is Large ribosomal subunit protein bL12 (126 aa).

The interval 97 to 126 (PQPVKSGVSKEEAEEAKKQLAESGAEVEVK) is disordered. The span at 104–116 (VSKEEAEEAKKQL) shows a compositional bias: basic and acidic residues.

It belongs to the bacterial ribosomal protein bL12 family. Homodimer. Part of the ribosomal stalk of the 50S ribosomal subunit. Forms a multimeric L10(L12)X complex, where L10 forms an elongated spine to which 2 to 4 L12 dimers bind in a sequential fashion. Binds GTP-bound translation factors.

In terms of biological role, forms part of the ribosomal stalk which helps the ribosome interact with GTP-bound translation factors. Is thus essential for accurate translation. This Geotalea uraniireducens (strain Rf4) (Geobacter uraniireducens) protein is Large ribosomal subunit protein bL12.